We begin with the raw amino-acid sequence, 520 residues long: tRNA-2-methylthio-N(6)-dimethylallyladenosine synthase (520 aa).

The 119-residue stretch at 77–195 (KKFLIRTYGC…LPHLLRDAIF (119 aa)) folds into the MTTase N-terminal domain. Residues Cys86, Cys122, Cys156, Cys232, Cys236, and Cys239 each contribute to the [4Fe-4S] cluster site. The Radical SAM core domain occupies 218-448 (RKNKTQAWVN…ALVNDISNKR (231 aa)). Positions 450 to 513 (LDYQDKIVEV…TWSLDGEIVS (64 aa)) constitute a TRAM domain.

It belongs to the methylthiotransferase family. MiaB subfamily. Monomer. The cofactor is [4Fe-4S] cluster.

It is found in the cytoplasm. It carries out the reaction N(6)-dimethylallyladenosine(37) in tRNA + (sulfur carrier)-SH + AH2 + 2 S-adenosyl-L-methionine = 2-methylsulfanyl-N(6)-dimethylallyladenosine(37) in tRNA + (sulfur carrier)-H + 5'-deoxyadenosine + L-methionine + A + S-adenosyl-L-homocysteine + 2 H(+). Functionally, catalyzes the methylthiolation of N6-(dimethylallyl)adenosine (i(6)A), leading to the formation of 2-methylthio-N6-(dimethylallyl)adenosine (ms(2)i(6)A) at position 37 in tRNAs that read codons beginning with uridine. The sequence is that of tRNA-2-methylthio-N(6)-dimethylallyladenosine synthase from Shouchella clausii (strain KSM-K16) (Alkalihalobacillus clausii).